The chain runs to 545 residues: T-complex protein 1 subunit gamma (545 aa).

N-acetylmethionine is present on methionine 1. The segment at 1–24 (MMGHRPVLVLSQNTKRESGRKVQS) is disordered. Serine 11 is subject to Phosphoserine. Lysine 15 is covalently cross-linked (Glycyl lysine isopeptide (Lys-Gly) (interchain with G-Cter in SUMO2)). Glycine 42 provides a ligand contact to ADP. Glycine 42 is an ATP binding site. Aspartate 93 is a binding site for Mg(2+). Glycine 94, threonine 95, threonine 96, serine 97, threonine 162, and lysine 163 together coordinate ADP. Residues glycine 94, threonine 95, and threonine 96 each coordinate ATP. At serine 170 the chain carries Phosphoserine. An N6-acetyllysine modification is found at lysine 222. Phosphoserine is present on residues serine 243 and serine 244. A Phosphotyrosine modification is found at tyrosine 247. Glycyl lysine isopeptide (Lys-Gly) (interchain with G-Cter in SUMO2) cross-links involve residues lysine 248 and lysine 249. Serine 252 is subject to Phosphoserine. Cysteine 366 and cysteine 372 are disulfide-bonded. Lysine 381 is covalently cross-linked (Glycyl lysine isopeptide (Lys-Gly) (interchain with G-Cter in SUMO2)). Residue glycine 411 coordinates ADP. Position 411 (glycine 411) interacts with ATP. Threonine 430 and threonine 459 each carry phosphothreonine. ADP-binding residues include glycine 482, glutamate 483, glutamate 497, and lysine 502. Glycine 482 is a binding site for ATP. ATP is bound at residue glutamate 497. A disordered region spans residues 526-545 (HKKKGDDQNRQTGAPDAGQE).

This sequence belongs to the TCP-1 chaperonin family. In terms of assembly, component of the chaperonin-containing T-complex (TRiC), a hexadecamer composed of two identical back-to-back stacked rings enclosing a protein folding chamber. Each ring is made up of eight different subunits: TCP1/CCT1, CCT2, CCT3, CCT4, CCT5, CCT6A/CCT6, CCT7, CCT8. Interacts with PACRG. Interacts with DNAAF4. Interacts with DLEC1. In terms of processing, the N-terminus is blocked.

It localises to the cytoplasm. It catalyses the reaction ATP + H2O = ADP + phosphate + H(+). In terms of biological role, component of the chaperonin-containing T-complex (TRiC), a molecular chaperone complex that assists the folding of actin, tubulin and other proteins upon ATP hydrolysis. The TRiC complex mediates the folding of WRAP53/TCAB1, thereby regulating telomere maintenance. As part of the TRiC complex may play a role in the assembly of BBSome, a complex involved in ciliogenesis regulating transports vesicles to the cilia. The protein is T-complex protein 1 subunit gamma (Cct3) of Mus musculus (Mouse).